We begin with the raw amino-acid sequence, 119 residues long: Large ribosomal subunit protein uL18 (119 aa).

The protein belongs to the universal ribosomal protein uL18 family. In terms of assembly, part of the 50S ribosomal subunit; part of the 5S rRNA/L5/L18/L25 subcomplex. Contacts the 5S and 23S rRNAs.

Its function is as follows. This is one of the proteins that bind and probably mediate the attachment of the 5S RNA into the large ribosomal subunit, where it forms part of the central protuberance. The sequence is that of Large ribosomal subunit protein uL18 from Clostridium botulinum (strain Loch Maree / Type A3).